Here is a 206-residue protein sequence, read N- to C-terminus: Small ribosomal subunit protein uS4 (206 aa).

The 61-residue stretch at 96 to 156 (GRLDNVVYRM…EKAKKQSRVK (61 aa)) folds into the S4 RNA-binding domain.

Belongs to the universal ribosomal protein uS4 family. Part of the 30S ribosomal subunit. Contacts protein S5. The interaction surface between S4 and S5 is involved in control of translational fidelity.

Its function is as follows. One of the primary rRNA binding proteins, it binds directly to 16S rRNA where it nucleates assembly of the body of the 30S subunit. With S5 and S12 plays an important role in translational accuracy. This is Small ribosomal subunit protein uS4 from Escherichia fergusonii (strain ATCC 35469 / DSM 13698 / CCUG 18766 / IAM 14443 / JCM 21226 / LMG 7866 / NBRC 102419 / NCTC 12128 / CDC 0568-73).